Here is a 1733-residue protein sequence, read N- to C-terminus: DNA-directed RNA polymerase II subunit RPB1 (1733 aa).

The Zn(2+) site is built by Cys67, Cys70, Cys77, His80, Cys107, Cys110, Cys148, and Cys167. Residues 248 to 260 (PSISFNESQRGED) are lid loop. The rudder loop stretch occupies residues 306–323 (NDIAGQPQALQKSGRPVK). Residues Asp481, Asp483, and Asp485 each coordinate Mg(2+). Residue Lys695 forms a Glycyl lysine isopeptide (Lys-Gly) (interchain with G-Cter in ubiquitin) linkage. Positions 810-822 (PQEFFFHAMGGRE) are bridging helix. Glycyl lysine isopeptide (Lys-Gly) (interchain with G-Cter in ubiquitin) cross-links involve residues Lys1246 and Lys1350. Thr1471 bears the Phosphothreonine mark. The interval 1537–1733 (VSSPGFSPTS…QKHNENENSR (197 aa)) is disordered. Low complexity predominate over residues 1538 to 1719 (SSPGFSPTSP…YSPGSPAYSP (182 aa)). Tandem repeats lie at residues 1549–1555 (YSPTSPA), 1556–1562 (YSPTSPS), 1563–1569 (YSPTSPS), 1570–1576 (YSPTSPS), 1577–1583 (YSPTSPS), 1584–1590 (YSPTSPS), 1591–1597 (YSPTSPS), 1598–1604 (YSPTSPS), 1605–1611 (YSPTSPS), 1612–1618 (YSPTSPS), 1619–1625 (YSPTSPS), 1626–1632 (YSPTSPS), 1633–1639 (YSPTSPS), 1640–1646 (YSPTSPS), 1647–1653 (YSPTSPS), 1654–1660 (YSPTSPA), 1661–1667 (YSPTSPS), 1668–1674 (YSPTSPS), 1675–1681 (YSPTSPS), 1682–1688 (YSPTSPS), 1689–1695 (YSPTSPN), 1696–1702 (YSPTSPS), and 1703–1709 (YSPTSPG). Residues 1549-1716 (YSPTSPAYSP…SPGYSPGSPA (168 aa)) are C-terminal domain (CTD); 24 X 7 AA approximate tandem repeats of Y-S-P-T-S-P-[A-S-N-G]. A 24; approximate repeat occupies 1710–1716 (YSPGSPA). Positions 1720–1733 (KQDEQKHNENENSR) are enriched in basic and acidic residues.

It belongs to the RNA polymerase beta' chain family. As to quaternary structure, component of the RNA polymerase II (Pol II) complex consisting of 12 subunits. Interacts with DEF1; the interaction is direct and serves to bridge RPB1 to the Elongin complex in a DNA-damaged dependent manner. Interacts with the Elongin subunit ELA1. Interacts with the Elongin subunit ELC1. Interacts with ASK10. Interacts with ESS1. Interacts with RTT103. Interacts with SHE2. The tandem 7 residues repeats in the C-terminal domain (CTD) can be highly phosphorylated. The phosphorylation activates Pol II. Phosphorylation occurs mainly at residues 'Ser-2' and 'Ser-5' of the heptapeptide repeat. The phosphorylated form of Pol II appears to carry, on average, one phosphate per repeat. The phosphorylation state is believed to result from the balanced action of site-specific CTD kinases and phosphatases, and a 'CTD code' that specifies the position of Pol II within the transcription cycle has been proposed. Phosphorylation at 'Ser-5' occurs in promoter-proximal regions in early elongation. Phosphorylation at 'Ser-2' predominates in regions more distal to the promoter and triggers binding of the 3' RNA processing machinery. CTD kinases include KIN28 (as part of the TFKII complex, a subcomplex of the TFIIH holo complex), SSN3/SRB10 (as part of the SRB8-11 complex, a module of the Mediator complex), CTK1 (as part of CTD kinase), and probably BUR1 (as part of the BUR1-BUR2 kinase complex). Phosphatases include FCP1 and SSU72. In terms of processing, following transcription stress, the elongating form of RNA polymerase II (RNA pol IIo) is polyubiquitinated via 'Lys-63'-linkages on Lys-1246 by the RSP5-UBA1-UBC5 complex at DNA damage sites without leading to degradation: ubiquitination promotes RNA pol IIo backtracking to allow access by the transcription-coupled nucleotide excision repair (TC-NER) machinery. Subsequent DEF1-dependent polyubiquitination by the elongin complex via 'Lys-48'-linkages may lead to proteasome-mediated degradation; presumably at stalled RNA pol II where TC-NER has failed, to halt global transcription and enable 'last resort' DNA repair pathways.

The protein localises to the nucleus. The catalysed reaction is RNA(n) + a ribonucleoside 5'-triphosphate = RNA(n+1) + diphosphate. Functionally, DNA-dependent RNA polymerase catalyzes the transcription of DNA into RNA using the four ribonucleoside triphosphates as substrates. Largest and catalytic component of RNA polymerase II which synthesizes mRNA precursors and many functional non-coding RNAs. Forms the polymerase active center together with the second largest subunit. Pol II is the central component of the basal RNA polymerase II transcription machinery. During a transcription cycle, Pol II, general transcription factors and the Mediator complex assemble as the preinitiation complex (PIC) at the promoter. 11-15 base pairs of DNA surrounding the transcription start site are melted and the single-stranded DNA template strand of the promoter is positioned deeply within the central active site cleft of Pol II to form the open complex. After synthesis of about 30 bases of RNA, Pol II releases its contacts with the core promoter and the rest of the transcription machinery (promoter clearance) and enters the stage of transcription elongation in which it moves on the template as the transcript elongates. Pol II appears to oscillate between inactive and active conformations at each step of nucleotide addition. Elongation is influenced by the phosphorylation status of the C-terminal domain (CTD) of Pol II largest subunit (RPB1), which serves as a platform for assembly of factors that regulate transcription initiation, elongation, termination and mRNA processing. Pol II is composed of mobile elements that move relative to each other. The core element with the central large cleft comprises RPB3, RBP10, RPB11, RPB12 and regions of RPB1 and RPB2 forming the active center. The clamp element (portions of RPB1, RPB2 and RPB3) is connected to the core through a set of flexible switches and moves to open and close the cleft. A bridging helix emanates from RPB1 and crosses the cleft near the catalytic site and is thought to promote translocation of Pol II by acting as a ratchet that moves the RNA-DNA hybrid through the active site by switching from straight to bent conformations at each step of nucleotide addition. In elongating Pol II, the lid loop (RPB1) appears to act as a wedge to drive apart the DNA and RNA strands at the upstream end of the transcription bubble and guide the RNA strand toward the RNA exit groove located near the base of the largely unstructured CTD domain of RPB1. The rudder loop (RPB1) interacts with single-stranded DNA after separation from the RNA strand, likely preventing reassociation with the exiting RNA. The cleft is surrounded by jaws: an upper jaw formed by portions of RBP1, RPB2 and RPB9, and a lower jaw, formed by RPB5 and portions of RBP1. The jaws are thought to grab the incoming DNA template, mainly by RPB5 direct contacts to DNA. The chain is DNA-directed RNA polymerase II subunit RPB1 (RPO21) from Saccharomyces cerevisiae (strain ATCC 204508 / S288c) (Baker's yeast).